Reading from the N-terminus, the 561-residue chain is Potassium-transporting ATPase potassium-binding subunit (561 aa).

10 helical membrane passes run 4-24 (IVMQDAFFVVLLLVLAVPLGI), 65-85 (AVSVLAFSAVGFVFVMAVLML), 133-153 (IGLTVQNFVSAATGIAVLFAV), 177-197 (LYILLPLSLILALLLVSQGVV), 253-273 (FTNLIEMLAILLIPVALVVMF), 285-305 (AIMTAMMIVFVIGVVAITISE), 380-400 (GLYGMIGFIILTVFIAGLLVG), 417-437 (MVCLLILVPPLLTLFGTAVAV), 484-504 (MVGAVMMLLARFIPLVAALYL), and 528-548 (FIGLLIGVVVLVGALSFLPAL).

Belongs to the KdpA family. In terms of assembly, the system is composed of three essential subunits: KdpA, KdpB and KdpC.

Its subcellular location is the cell membrane. In terms of biological role, part of the high-affinity ATP-driven potassium transport (or Kdp) system, which catalyzes the hydrolysis of ATP coupled with the electrogenic transport of potassium into the cytoplasm. This subunit binds the extracellular potassium ions and delivers the ions to the membrane domain of KdpB through an intramembrane tunnel. The chain is Potassium-transporting ATPase potassium-binding subunit from Listeria monocytogenes serotype 4b (strain CLIP80459).